A 647-amino-acid polypeptide reads, in one-letter code: Threonine--tRNA ligase (647 aa).

Positions 1–61 (MINITFPDGA…TEDGSIEIVT (61 aa)) constitute a TGS domain. The tract at residues 242–540 (DHRKLGKELD…LIENYKGAFP (299 aa)) is catalytic. Zn(2+) contacts are provided by cysteine 336, histidine 387, and histidine 517.

The protein belongs to the class-II aminoacyl-tRNA synthetase family. In terms of assembly, homodimer. It depends on Zn(2+) as a cofactor.

It is found in the cytoplasm. It catalyses the reaction tRNA(Thr) + L-threonine + ATP = L-threonyl-tRNA(Thr) + AMP + diphosphate + H(+). Functionally, catalyzes the attachment of threonine to tRNA(Thr) in a two-step reaction: L-threonine is first activated by ATP to form Thr-AMP and then transferred to the acceptor end of tRNA(Thr). Also edits incorrectly charged L-seryl-tRNA(Thr). The protein is Threonine--tRNA ligase of Streptococcus pneumoniae (strain P1031).